We begin with the raw amino-acid sequence, 335 residues long: 3-ketodihydrosphingosine reductase TSC10 (335 aa).

NADPH-binding residues include Gly-42, Ser-44, Ser-45, and Gly-46. A GXSXG motif is present at residues 42 to 46 (GGSSG). Residue Leu-47 coordinates NADP(+). Residues Arg-67, Asp-68, Lys-71, Asp-95, and Leu-96 each coordinate NADPH. Asp-95 provides a ligand contact to NADP(+). 3 residues coordinate NADP(+): Tyr-190, Lys-194, and Ile-223. Tyr-190 serves as the catalytic Proton acceptor. Catalysis depends on Lys-194, which acts as the Lowers pKa of active site Tyr. A helical transmembrane segment spans residues 288–308 (TNNFLLDTLWLIVSSVGVPIW).

Belongs to the short-chain dehydrogenases/reductases (SDR) family.

It localises to the endoplasmic reticulum membrane. The enzyme catalyses sphinganine + NADP(+) = 3-oxosphinganine + NADPH + H(+). The protein operates within lipid metabolism; sphingolipid metabolism. Functionally, catalyzes the reduction of 3'-oxosphinganine (3-ketodihydrosphingosine/KDS) to sphinganine (dihydrosphingosine/DHS), the second step of de novo sphingolipid biosynthesis. The chain is 3-ketodihydrosphingosine reductase TSC10 (TSC10) from Cryptococcus neoformans var. neoformans serotype D (strain B-3501A) (Filobasidiella neoformans).